The primary structure comprises 102 residues: Small ribosomal subunit protein uS10 (102 aa).

It belongs to the universal ribosomal protein uS10 family. Part of the 30S ribosomal subunit.

Involved in the binding of tRNA to the ribosomes. This is Small ribosomal subunit protein uS10 from Myxococcus xanthus (strain DK1622).